The chain runs to 57 residues: Large ribosomal subunit protein bL32c (57 aa).

This sequence belongs to the bacterial ribosomal protein bL32 family.

It localises to the plastid. The protein resides in the chloroplast. The polypeptide is Large ribosomal subunit protein bL32c (Phalaenopsis aphrodite subsp. formosana (Moth orchid)).